The sequence spans 813 residues: Sodium/hydrogen exchanger 2 (813 aa).

7 helical membrane-spanning segments follow: residues 108–128 (IVPE…IIFG), 139–159 (TDVF…YFMP), 170–190 (IFWY…LSLF), 210–230 (LFGS…FENI), 238–258 (ILVF…YNLF), 279–299 (FFVV…IAAF), and 309–329 (VIEP…AEMF). The N-linked (GlcNAc...) asparagine glycan is linked to Asn351. 4 consecutive transmembrane segments (helical) span residues 362-382 (YFMK…MGVS), 393-413 (AFVC…VFVL), 431-451 (FIIA…FLLP), and 460-480 (LFIT…GITI). The span at 649–661 (LRKDNSLNRERRA) shows a compositional bias: basic and acidic residues. 2 disordered regions span residues 649–709 (LRKD…NLQP) and 736–813 (DVGS…NEKP). The span at 687 to 696 (VSNADGNSSD) shows a compositional bias: polar residues. Composition is skewed to basic and acidic residues over residues 770–781 (KDQRFGRGREDS) and 797–813 (RASE…NEKP).

The protein belongs to the monovalent cation:proton antiporter 1 (CPA1) transporter (TC 2.A.36) family. Interacts with CHP1 and CHP2. As to expression, predominantly in small intestine, colon, and stomach, with much lower levels in skeletal muscle, kidney, brain, testis, uterus, heart and lung.

The protein resides in the apical cell membrane. The enzyme catalyses Na(+)(in) + H(+)(out) = Na(+)(out) + H(+)(in). Li(+) activates Na(+)/H(+) exchanger. Plasma membrane Na(+)/H(+) antiporter. Mediates the electroneutral exchange of intracellular H(+) ions for extracellular Na(+). Major apical Na(+)/H(+) exchanger in the base of the colonic crypt. Controls in the colonic crypt intracellular pH (pHi) to direct colonic epithelial cell differentiation into the absorptive enterocyte lineage at the expense of the secretory lineage. This chain is Sodium/hydrogen exchanger 2 (Slc9a2), found in Rattus norvegicus (Rat).